The primary structure comprises 142 residues: Antirestriction protein KlcA (142 aa).

It belongs to the antirestriction protein family.

Its function is as follows. Could be involved in overcoming restriction barriers during establishment after conjugative transfer. The sequence is that of Antirestriction protein KlcA (klcA) from Escherichia coli.